The primary structure comprises 717 residues: DNA ligase (717 aa).

NAD(+) contacts are provided by residues 44–48, 93–94, and glutamate 127; these read DADYD and SL. Lysine 129 (N6-AMP-lysine intermediate) is an active-site residue. NAD(+)-binding residues include arginine 150, glutamate 186, lysine 302, and lysine 326. Zn(2+) contacts are provided by cysteine 431, cysteine 434, cysteine 455, and cysteine 461. Positions 639–717 constitute a BRCT domain; sequence ATDSPVAGKT…EDEWLALIGG (79 aa).

This sequence belongs to the NAD-dependent DNA ligase family. LigA subfamily. Mg(2+) is required as a cofactor. Mn(2+) serves as cofactor.

The enzyme catalyses NAD(+) + (deoxyribonucleotide)n-3'-hydroxyl + 5'-phospho-(deoxyribonucleotide)m = (deoxyribonucleotide)n+m + AMP + beta-nicotinamide D-nucleotide.. Its function is as follows. DNA ligase that catalyzes the formation of phosphodiester linkages between 5'-phosphoryl and 3'-hydroxyl groups in double-stranded DNA using NAD as a coenzyme and as the energy source for the reaction. It is essential for DNA replication and repair of damaged DNA. The polypeptide is DNA ligase (Rhizobium meliloti (strain 1021) (Ensifer meliloti)).